A 442-amino-acid polypeptide reads, in one-letter code: Cytochrome c biogenesis CcmF C-terminal-like mitochondrial protein (442 aa).

A run of 3 helical transmembrane segments spans residues 6–26 (NFFF…PVLL), 39–59 (PFFN…LVYL), and 122–142 (YLES…FFLA). The segment at 151–175 (RARRRKGQTLRPNGNEQRRNDKMRC) is disordered. The span at 166-175 (EQRRNDKMRC) shows a compositional bias: basic and acidic residues. Residues 411 to 431 (FIFFIWIGFMLASLGGLPSLL) form a helical membrane-spanning segment.

It belongs to the CcmF/CycK/Ccl1/NrfE/CcsA family. As to quaternary structure, interacts with CCMFN2.

It localises to the mitochondrion inner membrane. Forms a complex with CCMFN1, CCMFN2 and CCMH that performs the assembly of heme with c-type apocytochromes in mitochondria. The polypeptide is Cytochrome c biogenesis CcmF C-terminal-like mitochondrial protein (CCMFC) (Arabidopsis thaliana (Mouse-ear cress)).